We begin with the raw amino-acid sequence, 124 residues long: Small ribosomal subunit protein uS12 (124 aa).

Asp89 carries the post-translational modification 3-methylthioaspartic acid. Positions 105 to 124 are disordered; the sequence is AGVKDRRQSRSKYGAKRPKA. Positions 113-124 are enriched in basic residues; that stretch reads SRSKYGAKRPKA.

Belongs to the universal ribosomal protein uS12 family. Part of the 30S ribosomal subunit. Contacts proteins S8 and S17. May interact with IF1 in the 30S initiation complex.

Its function is as follows. With S4 and S5 plays an important role in translational accuracy. In terms of biological role, interacts with and stabilizes bases of the 16S rRNA that are involved in tRNA selection in the A site and with the mRNA backbone. Located at the interface of the 30S and 50S subunits, it traverses the body of the 30S subunit contacting proteins on the other side and probably holding the rRNA structure together. The combined cluster of proteins S8, S12 and S17 appears to hold together the shoulder and platform of the 30S subunit. This Synechococcus elongatus (strain ATCC 33912 / PCC 7942 / FACHB-805) (Anacystis nidulans R2) protein is Small ribosomal subunit protein uS12 (rpsL).